The chain runs to 114 residues: Biofilm growth-associated repressor (114 aa).

Residues 17 to 111 (DMEKRANEVA…ALYTIFCTQE (95 aa)) form the HTH arsR-type domain. The H-T-H motif DNA-binding region spans 51-74 (VGELEQQIGIGQPTLSQQLGVLRE).

Its function is as follows. Represses an operon that probably comprises itself, PD_1892, PD_1893, PD_1894 and blh. Binds to a palindromic AT-rich sequence spanning the -10 region of the blh promoter and blocks transcription of the operon. This Xylella fastidiosa (strain Temecula1 / ATCC 700964) protein is Biofilm growth-associated repressor (bigR).